The primary structure comprises 230 residues: Ribonuclease 3 (230 aa).

Residues 5–125 (YSRFYNILGY…VIGAIYLDSD (121 aa)) enclose the RNase III domain. Glu-40 lines the Mg(2+) pocket. Asp-44 is a catalytic residue. Mg(2+) contacts are provided by Asp-111 and Glu-114. Glu-114 is an active-site residue. The DRBM domain maps to 153–223 (DSKSKLQEIL…AEKMIEMLSQ (71 aa)).

Belongs to the ribonuclease III family. In terms of assembly, homodimer. Mg(2+) serves as cofactor.

The protein resides in the cytoplasm. The enzyme catalyses Endonucleolytic cleavage to 5'-phosphomonoester.. In terms of biological role, digests double-stranded RNA. Involved in the processing of primary rRNA transcript to yield the immediate precursors to the large and small rRNAs (23S and 16S). Processes some mRNAs, and tRNAs when they are encoded in the rRNA operon. Processes pre-crRNA and tracrRNA of type II CRISPR loci if present in the organism. This is Ribonuclease 3 from Francisella tularensis subsp. tularensis (strain WY96-3418).